A 332-amino-acid chain; its full sequence is Oxygen-dependent coproporphyrinogen-III oxidase (332 aa).

Position 119 (Ser-119) interacts with coproporphyrinogen III. The active-site Proton donor is the His-133. Coproporphyrinogen III contacts are provided by residues 135–137 and 284–285; these read NVR and GR.

It belongs to the aerobic coproporphyrinogen-III oxidase family. Homodimer.

It carries out the reaction coproporphyrinogen III + O2 + 2 H(+) = protoporphyrinogen IX + 2 CO2 + 2 H2O. The protein operates within porphyrin-containing compound metabolism; protoporphyrin-IX biosynthesis; protoporphyrinogen-IX from coproporphyrinogen-III (O2 route): step 1/1. Involved in the heme biosynthesis. Catalyzes the aerobic oxidative decarboxylation of propionate groups of rings A and B of coproporphyrinogen-III to yield the vinyl groups in protoporphyrinogen-IX. This is Oxygen-dependent coproporphyrinogen-III oxidase (cpox) from Dictyostelium discoideum (Social amoeba).